A 232-amino-acid polypeptide reads, in one-letter code: Zinc-finger homeodomain protein 5 (232 aa).

Positions 1-11 are enriched in acidic residues; the sequence is MELSEHEEDAG. The interval 1–25 is disordered; the sequence is MELSEHEEDAGDVGGGCSSPPTPPH. The segment at 40 to 86 adopts a ZF-HD dimerization-type; degenerate zinc-finger fold; it reads YHECLRNHAAASGGHVVDGCGEFMPASTEEPLACAACGCHRSFHRRD. The tract at residues 126-170 is disordered; the sequence is GLPFPGYGTPSGGTGTTTASSSDERLRPSPVQPRRRSRTTFTREQ. The homeobox DNA-binding region spans 159 to 222; sequence RRRSRTTFTR…NNKHSFKQKQ (64 aa).

Homo- and heterodimer with other ZFHD proteins.

Its subcellular location is the nucleus. Functionally, putative transcription factor. This chain is Zinc-finger homeodomain protein 5 (ZHD5), found in Oryza sativa subsp. indica (Rice).